The chain runs to 302 residues: Methionyl-tRNA formyltransferase (302 aa).

103 to 106 serves as a coordination point for (6S)-5,6,7,8-tetrahydrofolate; it reads SLLP.

The protein belongs to the Fmt family.

It carries out the reaction L-methionyl-tRNA(fMet) + (6R)-10-formyltetrahydrofolate = N-formyl-L-methionyl-tRNA(fMet) + (6S)-5,6,7,8-tetrahydrofolate + H(+). Functionally, attaches a formyl group to the free amino group of methionyl-tRNA(fMet). The formyl group appears to play a dual role in the initiator identity of N-formylmethionyl-tRNA by promoting its recognition by IF2 and preventing the misappropriation of this tRNA by the elongation apparatus. The protein is Methionyl-tRNA formyltransferase of Pseudothermotoga lettingae (strain ATCC BAA-301 / DSM 14385 / NBRC 107922 / TMO) (Thermotoga lettingae).